Consider the following 328-residue polypeptide: PhoH-like protein (328 aa).

135 to 142 (GPAGTGKT) is a binding site for ATP.

Belongs to the PhoH family.

It localises to the cytoplasm. This chain is PhoH-like protein, found in Synechocystis sp. (strain ATCC 27184 / PCC 6803 / Kazusa).